The following is a 283-amino-acid chain: Pantothenate synthetase (283 aa).

30 to 37 (MGYLHDGH) is an ATP binding site. The active-site Proton donor is the His37. Gln61 provides a ligand contact to (R)-pantoate. Gln61 contacts beta-alanine. 147–150 (GKKD) contributes to the ATP binding site. Gln153 is a binding site for (R)-pantoate. Residues Ile176 and 184 to 187 (MSSR) contribute to the ATP site.

Belongs to the pantothenate synthetase family. As to quaternary structure, homodimer.

The protein resides in the cytoplasm. The catalysed reaction is (R)-pantoate + beta-alanine + ATP = (R)-pantothenate + AMP + diphosphate + H(+). It functions in the pathway cofactor biosynthesis; (R)-pantothenate biosynthesis; (R)-pantothenate from (R)-pantoate and beta-alanine: step 1/1. Its function is as follows. Catalyzes the condensation of pantoate with beta-alanine in an ATP-dependent reaction via a pantoyl-adenylate intermediate. The protein is Pantothenate synthetase of Geobacter sulfurreducens (strain ATCC 51573 / DSM 12127 / PCA).